The primary structure comprises 217 residues: Transmembrane protein 247 (217 aa).

The span at 1–10 (MATEDREMME) shows a compositional bias: basic and acidic residues. The disordered stretch occupies residues 1–87 (MATEDREMME…GPATTKGQAG (87 aa)). A coiled-coil region spans residues 109–154 (RERDAEMELEKVRMEFELKRLKYLHEENERQRQHEEVMEQLQQQAT). 2 helical membrane-spanning segments follow: residues 165–185 (LLLP…IHII) and 192–212 (IFFL…LCLI).

The protein resides in the membrane. The polypeptide is Transmembrane protein 247 (Bos taurus (Bovine)).